A 231-amino-acid chain; its full sequence is GTP-binding protein RHO3 (231 aa).

23-30 is a GTP binding site; it reads GDGACGKT. The Effector region motif lies at 45 to 53; sequence YEPTVFENY. Residues 70 to 74 and 128 to 131 each bind GTP; these read DTAGQ and LKCD. Polar residues predominate over residues 139–150; the sequence is SNAITPNNIQQD. The interval 139–165 is disordered; it reads SNAITPNNIQQDNSVSNDNGNNINSTS. Residues 151–165 are compositionally biased toward low complexity; sequence NSVSNDNGNNINSTS. Residue cysteine 228 is modified to Cysteine methyl ester. Cysteine 228 carries the S-farnesyl cysteine lipid modification. The propeptide at 229-231 is removed in mature form; that stretch reads TIM.

It belongs to the small GTPase superfamily. Rho family. In terms of assembly, interacts with TOS7.

It localises to the cell membrane. With respect to regulation, activity is positively regulated by the GTPase activating protein (GAP) RGD1. Functionally, plays an important role in cell growth. Required to keep the uninucleated state. Modulates morphogenesis during bud growth via directing organization of the actin cytoskeleton and the position of the secretory machinery for exocytosis. This chain is GTP-binding protein RHO3, found in Saccharomyces cerevisiae (strain ATCC 204508 / S288c) (Baker's yeast).